We begin with the raw amino-acid sequence, 325 residues long: Natural cytotoxicity triggering receptor 1 (325 aa).

Residues 1–16 (MLPTLTALLCLGLCLS) form the signal peptide. The Extracellular segment spans residues 17–258 (QRINTEKQTL…WDHTAQNLIR (242 aa)). 2 Ig-like domains span residues 42–100 (GNSV…TCFY) and 137–192 (GENV…RCFG). The cysteines at positions 49 and 98 are disulfide-linked. Asparagine 139 carries an N-linked (GlcNAc...) asparagine glycan. An intrachain disulfide couples cysteine 144 to cysteine 190. Asparagine 216 carries N-linked (GlcNAc...) asparagine glycosylation. A helical membrane pass occupies residues 259–279 (IGLACIIVMALVWLLAEDWLS). Residues 280–325 (RRKDHEKLNRLTSWECRGRRRMHRYHEEEQRDAISMRELKATPGDM) are Cytoplasmic-facing.

It belongs to the natural cytotoxicity receptor (NCR) family. Interacts with CD3Z and FCER1G. Weakly expressed in spleen, heart and lung.

Its subcellular location is the cell membrane. In terms of biological role, cytotoxicity-activating receptor that may contribute to the increased efficiency of activated natural killer (NK) cells to mediate tumor cell lysis. The chain is Natural cytotoxicity triggering receptor 1 (Ncr1) from Rattus norvegicus (Rat).